Here is a 327-residue protein sequence, read N- to C-terminus: Golgi to ER traffic protein 4 homolog (327 aa).

A2 is modified (N-acetylalanine). S12 is subject to Phosphoserine. Residues 195 to 271 are interacts with BAG6; that stretch reads FVAQAVLQFL…YQPSLRRDPM (77 aa). The tract at residues 307 to 327 is disordered; sequence GSSEQEDGEESPSDGSPIELD.

The protein belongs to the GET4 family. Component of the BAG6/BAT3 complex, at least composed of BAG6, UBL4A and GET4/TRC35. Interacts with BAG6; the interaction is direct and localizes BAG6 to the cytosol. Interacts with GET3. In terms of processing, ubiquitinated by RNF12, leading to proteasomal degradation. When unassembled from BAG6; ubiquitinylation is modulated by BAG6 quality control role and effectuated by RNF126.

It is found in the cytoplasm. Its subcellular location is the cytosol. Functionally, as part of a cytosolic protein quality control complex, the BAG6/BAT3 complex, maintains misfolded and hydrophobic patches-containing proteins in a soluble state and participates in their proper delivery to the endoplasmic reticulum or alternatively can promote their sorting to the proteasome where they undergo degradation. The BAG6/BAT3 complex is involved in the post-translational delivery of tail-anchored/type II transmembrane proteins to the endoplasmic reticulum membrane. Recruited to ribosomes, it interacts with the transmembrane region of newly synthesized tail-anchored proteins and together with SGTA and ASNA1 mediates their delivery to the endoplasmic reticulum. Client proteins that cannot be properly delivered to the endoplasmic reticulum are ubiquitinated and sorted to the proteasome. Similarly, the BAG6/BAT3 complex also functions as a sorting platform for proteins of the secretory pathway that are mislocalized to the cytosol either delivering them to the proteasome for degradation or to the endoplasmic reticulum. The BAG6/BAT3 complex also plays a role in the endoplasmic reticulum-associated degradation (ERAD), a quality control mechanism that eliminates unwanted proteins of the endoplasmic reticulum through their retrotranslocation to the cytosol and their targeting to the proteasome. It maintains these retrotranslocated proteins in an unfolded yet soluble state condition in the cytosol to ensure their proper delivery to the proteasome. The chain is Golgi to ER traffic protein 4 homolog from Homo sapiens (Human).